The following is a 263-amino-acid chain: Small ribosomal subunit protein uS15m (263 aa).

A mitochondrion-targeting transit peptide spans 1–70 (MVLKSVFRST…VRQYARPSRK (70 aa)). The span at 238–251 (EREKQKAEEAERKK) shows a compositional bias: basic and acidic residues. Residues 238 to 263 (EREKQKAEEAERKKSSSSTNPQETAA) are disordered.

It belongs to the universal ribosomal protein uS15 family. In terms of assembly, component of the mitochondrial ribosome small subunit (28S) which comprises a 12S rRNA and about 30 distinct proteins.

The protein localises to the mitochondrion. This is Small ribosomal subunit protein uS15m (mrps15) from Danio rerio (Zebrafish).